The primary structure comprises 631 residues: Phosphomethylpyrimidine synthase (631 aa).

Substrate-binding positions include Asn-239, Met-268, Tyr-297, His-333, 353–355, 394–397, and Glu-433; these read SRG and DGLR. His-437 provides a ligand contact to Zn(2+). A substrate-binding site is contributed by Tyr-460. Residue His-501 coordinates Zn(2+). [4Fe-4S] cluster is bound by residues Cys-581, Cys-584, and Cys-589.

This sequence belongs to the ThiC family. As to quaternary structure, homodimer. Requires [4Fe-4S] cluster as cofactor.

It carries out the reaction 5-amino-1-(5-phospho-beta-D-ribosyl)imidazole + S-adenosyl-L-methionine = 4-amino-2-methyl-5-(phosphooxymethyl)pyrimidine + CO + 5'-deoxyadenosine + formate + L-methionine + 3 H(+). Its pathway is cofactor biosynthesis; thiamine diphosphate biosynthesis. Its function is as follows. Catalyzes the synthesis of the hydroxymethylpyrimidine phosphate (HMP-P) moiety of thiamine from aminoimidazole ribotide (AIR) in a radical S-adenosyl-L-methionine (SAM)-dependent reaction. The sequence is that of Phosphomethylpyrimidine synthase from Escherichia coli (strain 55989 / EAEC).